The following is a 203-amino-acid chain: Sarcosine oxidase subunit gamma (203 aa).

This sequence belongs to the SoxG family. As to quaternary structure, heterotetramer composed of subunits alpha (SoxA), beta (SoxB), gamma (SoxG) and delta (SoxD).

The protein resides in the cytoplasm. It catalyses the reaction sarcosine + (6S)-5,6,7,8-tetrahydrofolate + O2 = (6R)-5,10-methylene-5,6,7,8-tetrahydrofolate + glycine + H2O2. It carries out the reaction sarcosine + O2 + H2O = formaldehyde + glycine + H2O2. In terms of biological role, in the presence of tetrahydrofolate, catalyzes the oxidative demethylation of sarcosine to yield glycine, 5,10-methylenetetrahydrofolate and hydrogen peroxide. In the absence of tetrahydrofolate, catalyzes the oxidative demethylation of sarcosine to yield glycine, formaldehyde and hydrogen peroxide. The chain is Sarcosine oxidase subunit gamma from Corynebacterium sp. (strain P-1).